A 154-amino-acid polypeptide reads, in one-letter code: 6,7-dimethyl-8-ribityllumazine synthase (154 aa).

5-amino-6-(D-ribitylamino)uracil is bound by residues phenylalanine 26, 60–62, and 84–86; these read ALE and CII. Residue 89 to 90 participates in (2S)-2-hydroxy-3-oxobutyl phosphate binding; the sequence is ET. Histidine 92 serves as the catalytic Proton donor. 5-amino-6-(D-ribitylamino)uracil is bound at residue asparagine 117. Arginine 131 provides a ligand contact to (2S)-2-hydroxy-3-oxobutyl phosphate.

This sequence belongs to the DMRL synthase family.

The catalysed reaction is (2S)-2-hydroxy-3-oxobutyl phosphate + 5-amino-6-(D-ribitylamino)uracil = 6,7-dimethyl-8-(1-D-ribityl)lumazine + phosphate + 2 H2O + H(+). The protein operates within cofactor biosynthesis; riboflavin biosynthesis; riboflavin from 2-hydroxy-3-oxobutyl phosphate and 5-amino-6-(D-ribitylamino)uracil: step 1/2. Its function is as follows. Catalyzes the formation of 6,7-dimethyl-8-ribityllumazine by condensation of 5-amino-6-(D-ribitylamino)uracil with 3,4-dihydroxy-2-butanone 4-phosphate. This is the penultimate step in the biosynthesis of riboflavin. This chain is 6,7-dimethyl-8-ribityllumazine synthase, found in Leptothrix cholodnii (strain ATCC 51168 / LMG 8142 / SP-6) (Leptothrix discophora (strain SP-6)).